Reading from the N-terminus, the 401-residue chain is Argininosuccinate synthase (401 aa).

ATP-binding positions include 10-18 and Ala-38; that span reads AYSGGVDTS. Residue Tyr-89 participates in L-citrulline binding. Gly-119 provides a ligand contact to ATP. Residues Thr-121, Asn-125, and Asp-126 each contribute to the L-aspartate site. Residue Asn-125 coordinates L-citrulline. Positions 129, 177, 186, 262, and 274 each coordinate L-citrulline.

Belongs to the argininosuccinate synthase family. Type 1 subfamily. Homotetramer.

The protein resides in the cytoplasm. The catalysed reaction is L-citrulline + L-aspartate + ATP = 2-(N(omega)-L-arginino)succinate + AMP + diphosphate + H(+). It participates in amino-acid biosynthesis; L-arginine biosynthesis; L-arginine from L-ornithine and carbamoyl phosphate: step 2/3. This is Argininosuccinate synthase from Synechococcus sp. (strain CC9311).